We begin with the raw amino-acid sequence, 352 residues long: Photosystem II D2 protein (352 aa).

Residues Thr40 to Thr60 traverse the membrane as a helical segment. Chlorophyll a is bound at residue His117. The helical transmembrane segment at Gly124–Pro140 threads the bilayer. 2 residues coordinate pheophytin a: Gln129 and Asn142. Residues Val152 to Ser165 traverse the membrane as a helical segment. Residue His197 coordinates chlorophyll a. A helical membrane pass occupies residues Gly207–Glu227. 2 residues coordinate a plastoquinone: His214 and Phe261. His214 provides a ligand contact to Fe cation. Fe cation is bound at residue His268. A helical membrane pass occupies residues Gly278–Arg294.

This sequence belongs to the reaction center PufL/M/PsbA/D family. In terms of assembly, PSII is composed of 1 copy each of membrane proteins PsbA, PsbB, PsbC, PsbD, PsbE, PsbF, PsbH, PsbI, PsbJ, PsbK, PsbL, PsbM, PsbT, PsbX, PsbY, PsbZ, Psb30/Ycf12, at least 3 peripheral proteins of the oxygen-evolving complex and a large number of cofactors. It forms dimeric complexes. It depends on The D1/D2 heterodimer binds P680, chlorophylls that are the primary electron donor of PSII, and subsequent electron acceptors. It shares a non-heme iron and each subunit binds pheophytin, quinone, additional chlorophylls, carotenoids and lipids. There is also a Cl(-1) ion associated with D1 and D2, which is required for oxygen evolution. The PSII complex binds additional chlorophylls, carotenoids and specific lipids. as a cofactor.

The protein resides in the plastid. The protein localises to the organellar chromatophore thylakoid membrane. The enzyme catalyses 2 a plastoquinone + 4 hnu + 2 H2O = 2 a plastoquinol + O2. Functionally, photosystem II (PSII) is a light-driven water:plastoquinone oxidoreductase that uses light energy to abstract electrons from H(2)O, generating O(2) and a proton gradient subsequently used for ATP formation. It consists of a core antenna complex that captures photons, and an electron transfer chain that converts photonic excitation into a charge separation. The D1/D2 (PsbA/PsbD) reaction center heterodimer binds P680, the primary electron donor of PSII as well as several subsequent electron acceptors. D2 is needed for assembly of a stable PSII complex. This is Photosystem II D2 protein from Paulinella chromatophora.